The sequence spans 72 residues: NAD(P)H-quinone oxidoreductase subunit O (72 aa).

Belongs to the complex I NdhO subunit family. As to quaternary structure, NDH-1 can be composed of about 15 different subunits; different subcomplexes with different compositions have been identified which probably have different functions.

Its subcellular location is the cellular thylakoid membrane. It carries out the reaction a plastoquinone + NADH + (n+1) H(+)(in) = a plastoquinol + NAD(+) + n H(+)(out). The enzyme catalyses a plastoquinone + NADPH + (n+1) H(+)(in) = a plastoquinol + NADP(+) + n H(+)(out). In terms of biological role, NDH-1 shuttles electrons from an unknown electron donor, via FMN and iron-sulfur (Fe-S) centers, to quinones in the respiratory and/or the photosynthetic chain. The immediate electron acceptor for the enzyme in this species is believed to be plastoquinone. Couples the redox reaction to proton translocation, and thus conserves the redox energy in a proton gradient. Cyanobacterial NDH-1 also plays a role in inorganic carbon-concentration. This is NAD(P)H-quinone oxidoreductase subunit O from Crocosphaera subtropica (strain ATCC 51142 / BH68) (Cyanothece sp. (strain ATCC 51142)).